The sequence spans 173 residues: Probable F-box protein At1g27490 (173 aa).

The F-box domain maps to 1 to 46; the sequence is MEWSLPVDLQEEILSRVPAKSLARWKSTPKQWKGPISIEFLHLLRS.

The protein is Probable F-box protein At1g27490 of Arabidopsis thaliana (Mouse-ear cress).